The primary structure comprises 263 residues: Small ribosomal subunit protein uS3 (263 aa).

One can recognise a KH type-2 domain in the interval 39-107 (VREYLKKKLK…PVHVNIEEIR (69 aa)). The tract at residues 211–263 (GELPPEAATPREEERRPRRAPRGDRPDGGRPGRPGGRGRGPRKADAAPAPEGE) is disordered. The span at 219–240 (TPREEERRPRRAPRGDRPDGGR) shows a compositional bias: basic and acidic residues.

The protein belongs to the universal ribosomal protein uS3 family. As to quaternary structure, part of the 30S ribosomal subunit. Forms a tight complex with proteins S10 and S14.

Functionally, binds the lower part of the 30S subunit head. Binds mRNA in the 70S ribosome, positioning it for translation. This chain is Small ribosomal subunit protein uS3, found in Bordetella petrii (strain ATCC BAA-461 / DSM 12804 / CCUG 43448).